We begin with the raw amino-acid sequence, 200 residues long: Putative peroxiredoxin sll0755 (200 aa).

The 159-residue stretch at 5–163 folds into the Thioredoxin domain; it reads LRVGQPAPDF…TLRVLKAIRH (159 aa). Cys50 (cysteine sulfenic acid (-SOH) intermediate) is an active-site residue.

The protein belongs to the peroxiredoxin family. AhpC/Prx1 subfamily. Homodimer; disulfide-linked, upon oxidation.

It is found in the cytoplasm. It catalyses the reaction a hydroperoxide + [thioredoxin]-dithiol = an alcohol + [thioredoxin]-disulfide + H2O. Functionally, thiol-specific peroxidase that catalyzes the reduction of hydrogen peroxide and organic hydroperoxides to water and alcohols, respectively. Plays a role in cell protection against oxidative stress by detoxifying peroxides. This is Putative peroxiredoxin sll0755 from Synechocystis sp. (strain ATCC 27184 / PCC 6803 / Kazusa).